The chain runs to 182 residues: Large ribosomal subunit protein uL6 (182 aa).

This sequence belongs to the universal ribosomal protein uL6 family. As to quaternary structure, part of the 50S ribosomal subunit.

In terms of biological role, this protein binds to the 23S rRNA, and is important in its secondary structure. It is located near the subunit interface in the base of the L7/L12 stalk, and near the tRNA binding site of the peptidyltransferase center. This chain is Large ribosomal subunit protein uL6, found in Methanococcus vannielii.